The following is a 302-amino-acid chain: Large ribosomal subunit protein uL3c (302 aa).

Residues 1 to 36 (MFQSSRLVALGLCAALVLVGGSIILSGLSPNLSSPM) constitute a chloroplast transit peptide. A disordered region spans residues 208 to 239 (FQGSIRRWGMKRGPMSHGSKSHRQHGSIGCSA).

Belongs to the universal ribosomal protein uL3 family. In terms of assembly, part of the 50S ribosomal subunit.

It localises to the plastid. The protein localises to the chloroplast. Functionally, one of the primary rRNA binding proteins, it binds directly near the 3'-end of the 23S rRNA, where it nucleates assembly of the 50S subunit. This chain is Large ribosomal subunit protein uL3c (RPL3), found in Bigelowiella natans (Pedinomonas minutissima).